The chain runs to 559 residues: Amino-acid acetyltransferase, mitochondrial (559 aa).

Residues 162 to 188 (RLGPKPGSEDPTSELDFTPPETHTLPP) form a disordered region. Positions 362–538 (LPVQVFHSVS…GSAGLSYVED (177 aa)) constitute an N-acetyltransferase domain.

It belongs to the acetyltransferase family.

It is found in the mitochondrion. It catalyses the reaction L-glutamate + acetyl-CoA = N-acetyl-L-glutamate + CoA + H(+). It participates in amino-acid biosynthesis; L-arginine biosynthesis; N(2)-acetyl-L-ornithine from L-glutamate: step 1/4. Its function is as follows. N-acetylglutamate synthase involved in arginine biosynthesis. The protein is Amino-acid acetyltransferase, mitochondrial (ARG2) of Laccaria bicolor (strain S238N-H82 / ATCC MYA-4686) (Bicoloured deceiver).